The following is a 364-amino-acid chain: Variable large protein 21 (364 aa).

The N-terminal stretch at 1–26 is a signal peptide; the sequence is MRKRISAIINKLNISIMMMIVVLMIG. Cysteine 27 is lipidated: N-palmitoyl cysteine. Residue cysteine 27 is the site of S-diacylglycerol cysteine attachment.

The protein belongs to the variable large protein (Vlp) family. Alpha subfamily.

The protein localises to the cell outer membrane. Functionally, the Vlp and Vsp proteins are antigenically distinct proteins, only one vlp or vsp gene is transcriptionally active at any one time. Switching between these genes is a mechanism of host immune response evasion. The sequence is that of Variable large protein 21 from Borrelia hermsii.